We begin with the raw amino-acid sequence, 434 residues long: Putative nuclease OPG089 (434 aa).

It belongs to the XPG/RAD2 endonuclease family. FEN1 subfamily. It depends on Mg(2+) as a cofactor.

Its subcellular location is the virion. In terms of biological role, putative nuclease that seems to be required for double-strand break repair, homologous recombination, and production of full-length viral genomic DNA. The chain is Putative nuclease OPG089 (OPG089) from Monkeypox virus.